The chain runs to 643 residues: 3D-(3,5/4)-trihydroxycyclohexane-1,2-dione hydrolase (643 aa).

Glu65 is a thiamine diphosphate binding site. The interval Ser441–Gly521 is thiamine pyrophosphate binding. Residues Asp492 and Asn519 each contribute to the Mg(2+) site.

This sequence belongs to the TPP enzyme family. Mg(2+) serves as cofactor. The cofactor is thiamine diphosphate.

It catalyses the reaction 3D-3,5/4-trihydroxycyclohexane-1,2-dione + H2O = 5-deoxy-D-glucuronate + H(+). Its pathway is polyol metabolism; myo-inositol degradation into acetyl-CoA; acetyl-CoA from myo-inositol: step 3/7. In terms of biological role, involved in the cleavage of the C1-C2 bond of 3D-(3,5/4)-trihydroxycyclohexane-1,2-dione (THcHDO) to yield 5-deoxy-glucuronate (5DG). The polypeptide is 3D-(3,5/4)-trihydroxycyclohexane-1,2-dione hydrolase (Clostridium botulinum (strain Eklund 17B / Type B)).